We begin with the raw amino-acid sequence, 415 residues long: Packaging protein 3 (415 aa).

Disordered stretches follow at residues 1–56 and 66–85; these read MHPV…RRRA and EGLA…VQLK. The interval 1-173 is interaction with packaging protein 1; it reads MHPVLRQMRP…VNQEINFQKS (173 aa). Low complexity predominate over residues 31 to 46; it reads PTASGGATSAADAAAD. At serine 75 the chain carries Phosphoserine; by host. Positions 76-85 are enriched in basic and acidic residues; sequence PERHPRVQLK. Phosphoserine; by host is present on serine 360. The segment covering 381-394 has biased composition (low complexity); the sequence is GAGPGLAVAPARAG. Positions 381–415 are disordered; that stretch reads GAGPGLAVAPARAGNVGGVEEYDEDDEYEPEDGEY. Residues 400–415 show a composition bias toward acidic residues; that stretch reads EEYDEDDEYEPEDGEY.

The protein belongs to the adenoviridae packaging protein 3 family. Part of the genome packaging complex composed of packaging proteins 1, 2 and 3; this complex specifically binds to the packaging sequence on the left end of viral genomic DNA and performs packaging of the viral genome. Interacts with hexon-linking protein IIIa; this interaction is required to promote correct genome packaging. Post-translationally, cleaved at different sites by the viral protease during virion maturation.

Its subcellular location is the host nucleus. Its function is as follows. Involved in viral genome packaging through its interaction with packaging proteins 1 and 2. After proteolytic cleavage by adenovirus protease, L1 52/55k protein is removed from the capsid during viral maturation. The polypeptide is Packaging protein 3 (Human adenovirus C serotype 2 (HAdV-2)).